Here is a 908-residue protein sequence, read N- to C-terminus: Metabotropic glutamate receptor 8 (908 aa).

The first 33 residues, 1 to 33 (MVCEGKRSTSCPCFFLLTAKFYWILTMMQRTHS), serve as a signal peptide directing secretion. Residues 34-583 (QEYAHSIRLD…IIKLEWHSPW (550 aa)) are Extracellular-facing. Cys-64 and Cys-106 are joined by a disulfide. Residue Asn-95 is glycosylated (N-linked (GlcNAc...) asparagine). L-glutamate contacts are provided by residues Ser-156, 177 to 179 (AST), and Tyr-227. 7 disulfides stabilise this stretch: Cys-246–Cys-534, Cys-369–Cys-384, Cys-424–Cys-431, Cys-516–Cys-535, Cys-520–Cys-538, Cys-541–Cys-553, and Cys-556–Cys-569. N-linked (GlcNAc...) asparagine glycosylation occurs at Asn-298. Asp-309 contributes to the L-glutamate binding site. Residue Lys-401 participates in L-glutamate binding. Residues Asn-452 and Asn-480 are each glycosylated (N-linked (GlcNAc...) asparagine). Asn-565 carries an N-linked (GlcNAc...) asparagine glycan. A helical membrane pass occupies residues 584–608 (AVVPVFIAILGIIATTFVIVTFVRY). Residues 609-620 (NDTPIVRASGRE) lie on the Cytoplasmic side of the membrane. Residues 621-641 (LSYVLLTGIFLCYSITFLMIA) form a helical membrane-spanning segment. At 642 to 647 (APDTII) the chain is on the extracellular side. A helical membrane pass occupies residues 648–668 (CSFRRIFLGLGMCFSYAALLT). The Cytoplasmic segment spans residues 669 to 695 (KTNRIHRIFEQGKKSVTAPKFISPASQ). Residues 696–716 (LVITFSLISVQLLGVFVWFVV) traverse the membrane as a helical segment. Topologically, residues 717–746 (DPPHTIIDYGEQRTLDPENARGVLKCDISD) are extracellular. Residues 747–768 (LSLICSLGYSILLMVTCTVYAI) traverse the membrane as a helical segment. The Cytoplasmic portion of the chain corresponds to 769 to 781 (KTRGVPETFNEAK). The chain crosses the membrane as a helical span at residues 782–803 (PIGFTMYTTCIIWLAFIPIFFG). The Extracellular segment spans residues 804–818 (TAQSAEKMYIQTTTL). A helical transmembrane segment spans residues 819–843 (TVSMSLSASVSLGMLYMPKVYIIIF). The Cytoplasmic portion of the chain corresponds to 844–908 (HPEQNVQKRK…TYISYSNHSI (65 aa)). Lys-882 participates in a covalent cross-link: Glycyl lysine isopeptide (Lys-Gly) (interchain with G-Cter in SUMO1).

This sequence belongs to the G-protein coupled receptor 3 family. Interacts with PICK1. As to expression, strongly expressed in olfactory bulb, accessory olfactory bulb, and mammillary body. Weaker expression in the retina, and in scattered cells in the cortex and hindbrain.

It localises to the cell membrane. G-protein coupled receptor for glutamate. Ligand binding causes a conformation change that triggers signaling via guanine nucleotide-binding proteins (G proteins) and modulates the activity of down-stream effectors. Signaling inhibits adenylate cyclase activity. The protein is Metabotropic glutamate receptor 8 (Grm8) of Mus musculus (Mouse).